A 264-amino-acid polypeptide reads, in one-letter code: Small ribosomal subunit protein eS4 (264 aa).

The S4 RNA-binding domain occupies 42–104; that stretch reads LPLVIIMRNR…TNENFRLLYD (63 aa).

The protein belongs to the eukaryotic ribosomal protein eS4 family.

It localises to the cytoplasm. This chain is Small ribosomal subunit protein eS4 (RPS4), found in Solanum tuberosum (Potato).